Consider the following 490-residue polypeptide: 5'-3' exonuclease PLD3 (490 aa).

Over 1–38 (MKPKLMYQELKVPAEEPANELPMNEIEAWKAAEKKARW) the chain is Cytoplasmic. The helical; Signal-anchor for type II membrane protein transmembrane segment at 39–59 (VLLVLILAVVGFGALMTQLFL) threads the bilayer. Over 60-490 (WEYGDLHLFG…DSVGNACRLL (431 aa)) the chain is Lumenal. 2 disulfides stabilise this stretch: Cys77/Cys239 and Cys81/Cys237. 2 N-linked (GlcNAc...) asparagine glycosylation sites follow: Asn97 and Asn132. In terms of domain architecture, PLD phosphodiesterase 1 spans 196-223 (THGVLHTKFWVVDQTHFYLGSANMDWRS). Active-site residues include His201, Lys203, and Asp208. His201 serves as the catalytic Proton donor. Residues His201 and Lys203 each coordinate phosphate. Asn218 lines the phosphate pocket. N-linked (GlcNAc...) asparagine glycans are attached at residues Asn236, Asn284, and Asn387. Cys366 and Cys487 are oxidised to a cystine. Residues 411–437 (YARVNHNKYMVTERATYIGTSNWSGNY) enclose the PLD phosphodiesterase 2 domain. His416 serves as a coordination point for phosphate. The active-site Nucleophile is His416. Phe438 is a binding site for Mg(2+).

This sequence belongs to the phospholipase D family. Homodimer. Interacts with APP. N-glycosylated. In terms of processing, proteolytically processed to a soluble form that is stable within endosomes and lysosomes. During transport through the secretory pathway becomes proteolysed by cysteine proteases, thereby releasing a stable soluble lysosomal lumenal polypeptide, whereas the transmembrane-bound fragment is rapidly degraded. Its transport route to lysosomes involves ubiquitination and the ESCRT complex. Post-translationally, ubiquitinated. Ubiquitination mediates sorting into lysosomes.

Its subcellular location is the endoplasmic reticulum membrane. The protein resides in the lysosome lumen. It is found in the early endosome membrane. It localises to the late endosome membrane. The protein localises to the golgi apparatus membrane. Its subcellular location is the endosome membrane. It catalyses the reaction Exonucleolytic cleavage in the 5'- to 3'-direction to yield nucleoside 3'-phosphates.. It carries out the reaction a 5'-end 5'-dephospho-ribonucleotidyl-ribonucleotide-RNA + H2O = a ribonucleoside 3'-phosphate + a 5'-end dephospho-ribonucleoside-RNA + H(+). The catalysed reaction is a ribonucleoside 3'-phosphate-2'-3'-cyclophospho-GMP + H2O = a ribonucleoside 3'-phosphate + 2',3'-cyclophospho-GMP + H(+). The enzyme catalyses a 5'-end 5'-dephospho-2'-deoxyribonucleotidyl-2'-deoxyribonucleotide in single-stranded DNA + H2O = a 5'-end dephospho-2'-deoxyribonucleoside in single-stranded DNA + a 2'-deoxyribonucleoside 3'-phosphate + H(+). It catalyses the reaction a 5'-end 5'-phospho-2'-deoxyribonucleotide in single-stranded DNA + H2O = a 5'-end 5'-dephospho-2'-deoxyribonucleotide in single-stranded DNA + phosphate. It carries out the reaction a 3-lyso-sn-glycero-1-phospho-(3'-acyl-1'-sn-glycerol) + a 1-acyl-sn-glycerol = a 3-acyl-sn-glycero-1-phospho-(3'-acyl-1'-sn-glycerol) + glycerol. The catalysed reaction is 3-lyso-sn-glycero-1-phospho-(3'-(9Z-octadecenoyl)-1'-sn-glycerol) + 1-(9Z-octadecenoyl)-sn-glycerol = 3-(9Z-octadecenoyl)-sn-glycero-1-phospho-(3'-(9Z-octadecenoyl)-1'-sn-glycerol) + glycerol. Its function is as follows. 5'-&gt;3' exonuclease that hydrolyzes the phosphodiester bond of single-stranded DNA (ssDNA) and RNA molecules to form nucleoside 3'-monophosphates and 5'-end 5'-hydroxy deoxyribonucleotide/ribonucleotide fragments. Partially redundant with PLD4, can cleave all four nucleotides displaying higher efficiency for ssDNA and RNA fragments initiated with uridine and guanosine residues and lower efficiency for cytidine-initiated substrates. As a result, it does not always degrade polynucleotides to the single nucleotide level, it can stall at specific sites sparing certain fragments from exonucleolytic degradation. Processes self and pathogenic ssDNA and RNA molecules that reach the endolysosomal compartment via phagocytosis or autophagy and may serve as 'danger' signals for recognition by innate immune receptors such as toll-like receptors (TLRs). Degrades mitochondrial CpG-rich ssDNA fragments to prevent TLR9 activation and autoinflammatory response, but it can cleave viral RNA to generate ligands for TLR7 activation and initiate antiviral immune responses. In plasmacytoid dendritic cells, it cooperates with endonuclease RNASET2 to release 2',3'-cyclic guanosine monophosphate (2',3'-cGMP), a potent stimulatory ligand for TLR7. Produces 2',3'-cGMPs and cytidine-rich RNA fragments that occupy TLR7 ligand-binding pockets and trigger a signaling-competent state. Can exert polynucleotide phosphatase activity toward 5'-phosphorylated ssDNA substrates although at a slow rate. Transphosphatidylase that catalyzes the exchange with R to S stereo-inversion of the glycerol moiety between (S,R)-lysophosphatidylglycerol (LPG) and monoacylglycerol (MAG) substrates to yield (S,S)-bis(monoacylglycero)phosphate (BMP). Can synthesize a variety of (S,S)-BMPs representing the main phospholipid constituent of lysosomal intralumenal vesicle (ILV) membranes that bind acid hydrolases for lipid degradation. Regulates the homeostasis and interorganellar communication of the endolysosomal system with an overall impact on cellular removal of dysfunctional organelles via autophagy as well as proper protein and lipid turnover. May play a role in myotube formation in response to ER stress. The chain is 5'-3' exonuclease PLD3 (PLD3) from Macaca fascicularis (Crab-eating macaque).